The sequence spans 508 residues: Protein phosphatase PP2A regulatory subunit B (508 aa).

6 WD repeats span residues 19 to 58, 81 to 122, 166 to 204, 215 to 255, 274 to 312, and 329 to 370; these read TEAD…KKQS, EIEE…IKLV, AHAY…QSFN, ELTE…LCDS, EITS…KPIK, and ENDA…GNDD. A disordered region spans residues 369–466; it reads DDKPKFKSAF…MRRRMTSGVG (98 aa). A compositionally biased stretch (acidic residues) spans 396–418; sequence DDDDDDDDDDDDEEADDEFDEEV. A compositionally biased stretch (basic residues) spans 447-461; the sequence is FKSKKSGQHPMRRRM. The stretch at 477–507 is one WD 7 repeat; that stretch reads DFKKSILHLSWHPRENSVAIAATNNLYIFST.

Belongs to the phosphatase 2A regulatory subunit B family. In terms of assembly, PP2A exists in several trimeric forms, all of which consist of a core composed of a catalytic subunit associated with a 65 kDa (PR65) (Subunit A) and a 55 kDa (PR55) (Subunit B) regulatory subunit.

Its function is as follows. Phosphatase 2A affects a variety of biological processes in the cell such as transcription, cell cycle progression and cellular morphogenesis, and provides an initial identification of critical substrates for this phosphatase. The regulatory subunit may direct the catalytic subunit to distinct, albeit overlapping, subsets of substrates. The protein is Protein phosphatase PP2A regulatory subunit B (CDC55) of Candida tropicalis (Yeast).